Here is a 341-residue protein sequence, read N- to C-terminus: S-adenosylmethionine:tRNA ribosyltransferase-isomerase (341 aa).

This sequence belongs to the QueA family. In terms of assembly, monomer.

It localises to the cytoplasm. The catalysed reaction is 7-aminomethyl-7-carbaguanosine(34) in tRNA + S-adenosyl-L-methionine = epoxyqueuosine(34) in tRNA + adenine + L-methionine + 2 H(+). It participates in tRNA modification; tRNA-queuosine biosynthesis. Functionally, transfers and isomerizes the ribose moiety from AdoMet to the 7-aminomethyl group of 7-deazaguanine (preQ1-tRNA) to give epoxyqueuosine (oQ-tRNA). The chain is S-adenosylmethionine:tRNA ribosyltransferase-isomerase from Clostridium botulinum (strain Alaska E43 / Type E3).